Consider the following 587-residue polypeptide: 5-aminolevulinate synthase, erythroid-specific, mitochondrial (587 aa).

A mitochondrion-targeting transit peptide spans 1-49 (MVAAAMLLRSCPVLSQGPTGLLGKVAKTYQFLFSIGRCPILATQGPTCS). R163 serves as a coordination point for succinyl-CoA. Pyridoxal 5'-phosphate contacts are provided by C258 and F259. The succinyl-CoA site is built by S280 and K299. Pyridoxal 5'-phosphate-binding residues include S332, H360, and T388. K391 is a catalytic residue. An N6-(pyridoxal phosphate)lysine modification is found at K391. Pyridoxal 5'-phosphate is bound by residues T420 and T421. T508 lines the succinyl-CoA pocket.

The protein belongs to the class-II pyridoxal-phosphate-dependent aminotransferase family. As to quaternary structure, homodimer. Interacts with SUCLA2. The cofactor is pyridoxal 5'-phosphate. Predomnantly expressed in erythroid cells.

The protein resides in the mitochondrion inner membrane. It is found in the mitochondrion. It carries out the reaction succinyl-CoA + glycine + H(+) = 5-aminolevulinate + CO2 + CoA. The protein operates within porphyrin-containing compound metabolism; protoporphyrin-IX biosynthesis; 5-aminolevulinate from glycine: step 1/1. Catalyzes the pyridoxal 5'-phosphate (PLP)-dependent condensation of succinyl-CoA and glycine to form aminolevulinic acid (ALA), with CoA and CO2 as by-products. Contributes significantly to heme formation during erythropoiesis. This chain is 5-aminolevulinate synthase, erythroid-specific, mitochondrial (Alas2), found in Mus musculus (Mouse).